Consider the following 198-residue polypeptide: Small ribosomal subunit protein uS4z (198 aa).

Ser68 carries the phosphoserine modification. The 72-residue stretch at 109–180 (RRLQTIVFKS…PGRVKRRNEK (72 aa)) folds into the S4 RNA-binding domain. The disordered stretch occupies residues 163-198 (TSPFGGGRPGRVKRRNEKSASKKASGGGDADGDDEE).

It belongs to the universal ribosomal protein uS4 family. As to quaternary structure, binds to the translation initiation factors TIF3E1.

The polypeptide is Small ribosomal subunit protein uS4z (RPS9B) (Arabidopsis thaliana (Mouse-ear cress)).